Consider the following 267-residue polypeptide: L-aspartate dehydrogenase (267 aa).

2 residues coordinate NAD(+): A124 and N190. The active site involves H220.

It belongs to the L-aspartate dehydrogenase family.

The catalysed reaction is L-aspartate + NADP(+) + H2O = oxaloacetate + NH4(+) + NADPH + H(+). It carries out the reaction L-aspartate + NAD(+) + H2O = oxaloacetate + NH4(+) + NADH + H(+). It participates in cofactor biosynthesis; NAD(+) biosynthesis; iminoaspartate from L-aspartate (dehydrogenase route): step 1/1. Its function is as follows. Specifically catalyzes the NAD or NADP-dependent dehydrogenation of L-aspartate to iminoaspartate. In Pseudomonas aeruginosa (strain ATCC 15692 / DSM 22644 / CIP 104116 / JCM 14847 / LMG 12228 / 1C / PRS 101 / PAO1), this protein is L-aspartate dehydrogenase.